A 106-amino-acid polypeptide reads, in one-letter code: Ig kappa-b4 chain C region (106 aa).

The Ig-like domain occupies 6-99 (PSVLLFPPSK…VQGSASPIVQ (94 aa)). A disulfide bond links cysteine 27 and cysteine 87. Residues 48–64 (QQSGIENSKTPQSPEDN) are compositionally biased toward polar residues. Residues 48–67 (QQSGIENSKTPQSPEDNTYS) form a disordered region.

This chain is Ig kappa-b4 chain C region (K-BAS), found in Oryctolagus cuniculus (Rabbit).